Here is a 208-residue protein sequence, read N- to C-terminus: Putative adhesin P1-like protein MPN_468 (208 aa).

2 disordered regions span residues 29 to 49 and 97 to 172; these read TNGS…VAPT and DSKT…NLTP. A compositionally biased stretch (low complexity) spans 100-132; it reads TQNNTTTNENHTKFASATGSGQQQGSTTTTSAG. A compositionally biased stretch (polar residues) spans 145–158; it reads SGNSISVQEATSGD. The segment covering 159-172 has biased composition (low complexity); sequence NLTNYTNLPPNLTP.

It belongs to the adhesin P1 family.

This is Putative adhesin P1-like protein MPN_468 from Mycoplasma pneumoniae (strain ATCC 29342 / M129 / Subtype 1) (Mycoplasmoides pneumoniae).